The chain runs to 317 residues: Protease HtpX homolog (317 aa).

A run of 2 helical transmembrane segments spans residues 14-34 (LMGIAIFAIGFGIIYAILYYI) and 41-61 (IALLMVLLPIFIIMDIVQWLF). H146 contacts Zn(2+). E147 is a catalytic residue. H150 lines the Zn(2+) pocket. 2 consecutive transmembrane segments (helical) span residues 158–178 (MLLAIGLIPTLIFYFGYTLLF) and 189–209 (IVLLAIIAMAASFLFRFLILA). E215 is a binding site for Zn(2+).

This sequence belongs to the peptidase M48B family. Requires Zn(2+) as cofactor.

It localises to the cell membrane. In Thermoplasma acidophilum (strain ATCC 25905 / DSM 1728 / JCM 9062 / NBRC 15155 / AMRC-C165), this protein is Protease HtpX homolog.